The chain runs to 376 residues: Chaperone protein DnaJ (376 aa).

The 66-residue stretch at 5-70 (DYYEILGVSK…QKRAAYDQYG (66 aa)) folds into the J domain. The segment at 131–209 (GVTKEIRIPT…CHGHGRVERS (79 aa)) adopts a CR-type zinc-finger fold. Residues Cys144, Cys147, Cys161, Cys164, Cys183, Cys186, Cys197, and Cys200 each contribute to the Zn(2+) site. CXXCXGXG motif repeat units follow at residues 144–151 (CDVCHGSG), 161–168 (CPTCHGSG), 183–190 (CPHCQGRG), and 197–204 (CNKCHGHG).

The protein belongs to the DnaJ family. In terms of assembly, homodimer. The cofactor is Zn(2+).

The protein resides in the cytoplasm. Functionally, participates actively in the response to hyperosmotic and heat shock by preventing the aggregation of stress-denatured proteins and by disaggregating proteins, also in an autonomous, DnaK-independent fashion. Unfolded proteins bind initially to DnaJ; upon interaction with the DnaJ-bound protein, DnaK hydrolyzes its bound ATP, resulting in the formation of a stable complex. GrpE releases ADP from DnaK; ATP binding to DnaK triggers the release of the substrate protein, thus completing the reaction cycle. Several rounds of ATP-dependent interactions between DnaJ, DnaK and GrpE are required for fully efficient folding. Also involved, together with DnaK and GrpE, in the DNA replication of plasmids through activation of initiation proteins. This is Chaperone protein DnaJ from Escherichia coli O157:H7 (strain EC4115 / EHEC).